Here is a 514-residue protein sequence, read N- to C-terminus: 2-isopropylmalate synthase (514 aa).

Residues 4 to 266 (INVFDTSLRD…KTGLKLSELK (263 aa)) form the Pyruvate carboxyltransferase domain. The Mn(2+) site is built by Asp13, His201, His203, and Asn237. Positions 390 to 514 (ELTALQVTYG…AKREMAKVES (125 aa)) are regulatory domain.

Belongs to the alpha-IPM synthase/homocitrate synthase family. LeuA type 1 subfamily. As to quaternary structure, homodimer. Requires Mn(2+) as cofactor.

Its subcellular location is the cytoplasm. It catalyses the reaction 3-methyl-2-oxobutanoate + acetyl-CoA + H2O = (2S)-2-isopropylmalate + CoA + H(+). It functions in the pathway amino-acid biosynthesis; L-leucine biosynthesis; L-leucine from 3-methyl-2-oxobutanoate: step 1/4. In terms of biological role, catalyzes the condensation of the acetyl group of acetyl-CoA with 3-methyl-2-oxobutanoate (2-ketoisovalerate) to form 3-carboxy-3-hydroxy-4-methylpentanoate (2-isopropylmalate). This is 2-isopropylmalate synthase from Shouchella clausii (strain KSM-K16) (Alkalihalobacillus clausii).